The chain runs to 246 residues: Putative outer membrane protein YiaT (246 aa).

A signal peptide spans 1–21; it reads MLINRNIVALFALPFMASATA.

This sequence belongs to the MipA/OmpV family.

It is found in the cell outer membrane. This is Putative outer membrane protein YiaT (yiaT) from Escherichia coli (strain K12).